Reading from the N-terminus, the 521-residue chain is Probable cytochrome P450 12d1 distal, mitochondrial (521 aa).

A mitochondrion-targeting transit peptide spans 1–19 (MNTLSSARSVAIYVGPVRS). Cys-467 provides a ligand contact to heme.

Belongs to the cytochrome P450 family. The cofactor is heme.

Its subcellular location is the mitochondrion membrane. This is Probable cytochrome P450 12d1 distal, mitochondrial from Drosophila melanogaster (Fruit fly).